Reading from the N-terminus, the 189-residue chain is dTTP/UTP pyrophosphatase (189 aa).

Asp-64 functions as the Proton acceptor in the catalytic mechanism.

Belongs to the Maf family. YhdE subfamily. The cofactor is a divalent metal cation.

It localises to the cytoplasm. The enzyme catalyses dTTP + H2O = dTMP + diphosphate + H(+). It catalyses the reaction UTP + H2O = UMP + diphosphate + H(+). Nucleoside triphosphate pyrophosphatase that hydrolyzes dTTP and UTP. May have a dual role in cell division arrest and in preventing the incorporation of modified nucleotides into cellular nucleic acids. This Syntrophomonas wolfei subsp. wolfei (strain DSM 2245B / Goettingen) protein is dTTP/UTP pyrophosphatase.